A 44-amino-acid chain; its full sequence is Conotoxin Cl9a (44 aa).

4-carboxyglutamate occurs at positions 7, 8, and 24. 3 cysteine pairs are disulfide-bonded: Cys9-Cys33, Cys15-Cys40, and Cys23-Cys42.

As to expression, expressed by the venom duct.

Its subcellular location is the secreted. In Californiconus californicus (California cone), this protein is Conotoxin Cl9a.